We begin with the raw amino-acid sequence, 343 residues long: ATP-dependent 6-phosphofructokinase (343 aa).

ATP contacts are provided by residues Gly-10, 73–74 (RV), and 103–106 (GEGT). Position 104 (Glu-104) interacts with Mg(2+). Substrate contacts are provided by residues 126–128 (TID), Arg-163, 170–172 (MGR), Glu-223, Arg-267, and 273–276 (HIQR). Residue Asp-128 is the Proton acceptor of the active site.

The protein belongs to the phosphofructokinase type A (PFKA) family. Mixed-substrate PFK group III subfamily. Homodimer or homotetramer. Mg(2+) is required as a cofactor.

The protein localises to the cytoplasm. The enzyme catalyses beta-D-fructose 6-phosphate + ATP = beta-D-fructose 1,6-bisphosphate + ADP + H(+). It carries out the reaction D-tagatofuranose 6-phosphate + ATP = D-tagatofuranose 1,6-bisphosphate + ADP + H(+). It functions in the pathway carbohydrate degradation; glycolysis; D-glyceraldehyde 3-phosphate and glycerone phosphate from D-glucose: step 3/4. Catalyzes the phosphorylation of D-fructose 6-phosphate to fructose 1,6-bisphosphate by ATP, the first committing step of glycolysis. Can also catalyze the phosphorylation of tagatose-6-phosphate. The chain is ATP-dependent 6-phosphofructokinase from Mycobacterium tuberculosis (strain CDC 1551 / Oshkosh).